Consider the following 173-residue polypeptide: Photosystem I assembly protein Ycf3 (173 aa).

TPR repeat units follow at residues A35–A68, G72–Q105, and G120–G153.

It belongs to the Ycf3 family.

It localises to the cellular thylakoid membrane. In terms of biological role, essential for the assembly of the photosystem I (PSI) complex. May act as a chaperone-like factor to guide the assembly of the PSI subunits. This is Photosystem I assembly protein Ycf3 from Synechococcus sp. (strain CC9311).